The primary structure comprises 23 residues: Chaperonin GroEL (23 aa).

The protein belongs to the chaperonin (HSP60) family. As to quaternary structure, forms a cylinder of 14 subunits composed of two heptameric rings stacked back-to-back. Interacts with the co-chaperonin GroES. Phosphorylated on threonine.

The protein resides in the cytoplasm. The catalysed reaction is ATP + H2O + a folded polypeptide = ADP + phosphate + an unfolded polypeptide.. Its function is as follows. Together with its co-chaperonin GroES, plays an essential role in assisting protein folding. The GroEL-GroES system forms a nano-cage that allows encapsulation of the non-native substrate proteins and provides a physical environment optimized to promote and accelerate protein folding. In Acidithiobacillus ferrooxidans (Thiobacillus ferrooxidans), this protein is Chaperonin GroEL.